The sequence spans 368 residues: F-box/kelch-repeat protein At2g44700 (368 aa).

Residues 1 to 23 form a disordered region; the sequence is MSSSNEPPRKTDQPSSSSASASA. Over residues 14 to 23 the composition is skewed to low complexity; it reads PSSSSASASA. One can recognise an F-box domain in the interval 25–71; sequence PSLFLSLPLEIISMILARVPKRYYPILCSVSKNMRSLVRSPEIHKAR. The Kelch repeat unit spans residues 177 to 221; that stretch reads KVYVIGGYQDDEIAAESFDLNTQTWEAAPIPDEKESHRWICKANV.

The protein is F-box/kelch-repeat protein At2g44700 of Arabidopsis thaliana (Mouse-ear cress).